The chain runs to 366 residues: tRNA-specific 2-thiouridylase MnmA (366 aa).

Residues 12–19 and Met38 each bind ATP; that span reads GMSGGVDS. An interaction with target base in tRNA region spans residues 98-100; that stretch reads NPD. The active-site Nucleophile is Cys103. Cys103 and Cys200 form a disulfide bridge. Residue Gly128 participates in ATP binding. The segment at 150–152 is interaction with tRNA; that stretch reads KDQ. Residue Cys200 is the Cysteine persulfide intermediate of the active site. Residues 312 to 313 form an interaction with tRNA region; it reads RY.

This sequence belongs to the MnmA/TRMU family.

The protein localises to the cytoplasm. The enzyme catalyses S-sulfanyl-L-cysteinyl-[protein] + uridine(34) in tRNA + AH2 + ATP = 2-thiouridine(34) in tRNA + L-cysteinyl-[protein] + A + AMP + diphosphate + H(+). Catalyzes the 2-thiolation of uridine at the wobble position (U34) of tRNA, leading to the formation of s(2)U34. The chain is tRNA-specific 2-thiouridylase MnmA from Pseudoalteromonas translucida (strain TAC 125).